Consider the following 434-residue polypeptide: Serine/threonine transporter SstT (434 aa).

9 helical membrane passes run Ile-14–Ile-34, Phe-41–Ile-61, Phe-72–Ala-92, Ala-135–Leu-155, Thr-172–Leu-192, Leu-210–Val-230, Ile-282–Met-302, Ile-316–Ile-336, and Phe-351–Val-371. Residues Gly-413–Val-434 are disordered.

The protein belongs to the dicarboxylate/amino acid:cation symporter (DAACS) (TC 2.A.23) family.

The protein resides in the cell membrane. It carries out the reaction L-serine(in) + Na(+)(in) = L-serine(out) + Na(+)(out). The catalysed reaction is L-threonine(in) + Na(+)(in) = L-threonine(out) + Na(+)(out). In terms of biological role, involved in the import of serine and threonine into the cell, with the concomitant import of sodium (symport system). The sequence is that of Serine/threonine transporter SstT from Lacticaseibacillus casei (strain BL23) (Lactobacillus casei).